We begin with the raw amino-acid sequence, 688 residues long: Glycine--tRNA ligase beta subunit (688 aa).

The protein belongs to the class-II aminoacyl-tRNA synthetase family. Tetramer of two alpha and two beta subunits.

It is found in the cytoplasm. The enzyme catalyses tRNA(Gly) + glycine + ATP = glycyl-tRNA(Gly) + AMP + diphosphate. This Vibrio parahaemolyticus serotype O3:K6 (strain RIMD 2210633) protein is Glycine--tRNA ligase beta subunit.